The following is a 391-amino-acid chain: Formate-dependent phosphoribosylglycinamide formyltransferase (391 aa).

Residues 20 to 21 (EL) and Glu80 each bind N(1)-(5-phospho-beta-D-ribosyl)glycinamide. ATP-binding positions include Arg112, Lys153, 158–163 (SSGKGQ), 193–196 (EGFV), and Glu201. In terms of domain architecture, ATP-grasp spans 117–306 (RLAAETLGLP…EFALHVRAIL (190 aa)). Mg(2+) contacts are provided by Glu265 and Glu277. Residues Asp284, Lys354, and 361 to 362 (RR) each bind N(1)-(5-phospho-beta-D-ribosyl)glycinamide.

This sequence belongs to the PurK/PurT family. Homodimer.

The catalysed reaction is N(1)-(5-phospho-beta-D-ribosyl)glycinamide + formate + ATP = N(2)-formyl-N(1)-(5-phospho-beta-D-ribosyl)glycinamide + ADP + phosphate + H(+). Its pathway is purine metabolism; IMP biosynthesis via de novo pathway; N(2)-formyl-N(1)-(5-phospho-D-ribosyl)glycinamide from N(1)-(5-phospho-D-ribosyl)glycinamide (formate route): step 1/1. Involved in the de novo purine biosynthesis. Catalyzes the transfer of formate to 5-phospho-ribosyl-glycinamide (GAR), producing 5-phospho-ribosyl-N-formylglycinamide (FGAR). Formate is provided by PurU via hydrolysis of 10-formyl-tetrahydrofolate. The polypeptide is Formate-dependent phosphoribosylglycinamide formyltransferase (Shewanella putrefaciens (strain CN-32 / ATCC BAA-453)).